We begin with the raw amino-acid sequence, 632 residues long: Protein NSP-INTERACTING KINASE 3 (632 aa).

An N-terminal signal peptide occupies residues 1-25 (MEGVRFVVWRLGFLVFVWFFDISSA). Residues 26-238 (TLSPTGVNYE…GTRTNGHHVA (213 aa)) lie on the Extracellular side of the membrane. Asn-96 carries N-linked (GlcNAc...) asparagine glycosylation. LRR repeat units lie at residues 97–121 (LTYL…IGRL), 122–145 (EKLQ…LGEL), 147–168 (NLNY…SLSK), and 169–193 (IEGL…SART). Residues Asn-131, Asn-155, Asn-181, and Asn-210 are each glycosylated (N-linked (GlcNAc...) asparagine). A helical membrane pass occupies residues 239-259 (LAFAASFSAAFFVFFTSGMFL). Over 260-632 (WWRYRRNKQI…VEAIELSGPR (373 aa)) the chain is Cytoplasmic. Thr-298 bears the Phosphothreonine mark. The Protein kinase domain occupies 301-584 (FNSKNILGRG…EGDGLAERWE (284 aa)). Residue 307–315 (LGRGGYGIV) participates in ATP binding. Position 324 is a phosphothreonine (Thr-324). Lys-329 provides a ligand contact to ATP. Ser-382 and Ser-385 each carry phosphoserine. Residues 415 to 495 (YLHEQCDPKI…DVFGFGILLL (81 aa)) are interaction with geminivirus NSP protein. The active-site Proton acceptor is Asp-428. Phosphothreonine occurs at positions 461, 462, and 467. Tyr-475 is subject to Phosphotyrosine. At Ser-477 the chain carries Phosphoserine. Thr-478 is modified (phosphothreonine). A Phosphoserine modification is found at Ser-482. Phosphothreonine is present on Thr-557.

The protein belongs to the protein kinase superfamily. Ser/Thr protein kinase family. Oligomer. Interacts with geminivirus nuclear shuttle protein (NSP). Autophosphorylated. As to expression, expressed in seedlings, leaves and flowers.

Its subcellular location is the cell membrane. The enzyme catalyses L-seryl-[protein] + ATP = O-phospho-L-seryl-[protein] + ADP + H(+). It catalyses the reaction L-threonyl-[protein] + ATP = O-phospho-L-threonyl-[protein] + ADP + H(+). Inhibited by the viral nuclear shuttle protein (NSP) that binds to the region required for oligomerization. Functionally, involved in defense response to geminivirus infection. The sequence is that of Protein NSP-INTERACTING KINASE 3 (NIK3) from Arabidopsis thaliana (Mouse-ear cress).